The sequence spans 184 residues: PLASMODESMATA CALLOSE-BINDING PROTEIN 3 (184 aa).

Positions methionine 1–glycine 19 are cleaved as a signal peptide. A disulfide bond links cysteine 22 and cysteine 84. The tract at residues serine 109–isoleucine 146 is disordered. Residues threonine 113–serine 139 are compositionally biased toward low complexity. Residue serine 158 is the site of GPI-anchor amidated serine attachment. Residues phenylalanine 159–serine 184 constitute a propeptide, removed in mature form.

Post-translationally, contains two additional disulfide bonds. In terms of tissue distribution, expressed in the shoot apical region and in young leaves but also detected in the laminar and vasculature of mature leaves.

It localises to the cell membrane. The protein resides in the cell junction. It is found in the plasmodesma. This Arabidopsis thaliana (Mouse-ear cress) protein is PLASMODESMATA CALLOSE-BINDING PROTEIN 3 (PDCB3).